The chain runs to 385 residues: Spermidine/putrescine import ATP-binding protein PotA (385 aa).

The ABC transporter domain occupies Ile-6 to Ile-238. Gly-40–Ser-47 lines the ATP pocket.

Belongs to the ABC transporter superfamily. Spermidine/putrescine importer (TC 3.A.1.11.1) family. In terms of assembly, the complex is composed of two ATP-binding proteins (PotA), two transmembrane proteins (PotB and PotC) and a solute-binding protein (PotD).

The protein resides in the cell membrane. It catalyses the reaction ATP + H2O + polyamine-[polyamine-binding protein]Side 1 = ADP + phosphate + polyamineSide 2 + [polyamine-binding protein]Side 1.. In terms of biological role, part of the ABC transporter complex PotABCD involved in spermidine/putrescine import. Responsible for energy coupling to the transport system. This chain is Spermidine/putrescine import ATP-binding protein PotA, found in Streptococcus sanguinis (strain SK36).